A 584-amino-acid chain; its full sequence is DNA ligase (584 aa).

E249 is an ATP binding site. The N6-AMP-lysine intermediate role is filled by K251. The ATP site is built by R256, R271, E301, F341, R416, and K422.

This sequence belongs to the ATP-dependent DNA ligase family. It depends on Mg(2+) as a cofactor.

The enzyme catalyses ATP + (deoxyribonucleotide)n-3'-hydroxyl + 5'-phospho-(deoxyribonucleotide)m = (deoxyribonucleotide)n+m + AMP + diphosphate.. DNA ligase that seals nicks in double-stranded DNA during DNA replication, DNA recombination and DNA repair. This Pyrobaculum islandicum (strain DSM 4184 / JCM 9189 / GEO3) protein is DNA ligase.